The following is a 303-amino-acid chain: Acetylxylan esterase A (303 aa).

Residues Met1–Ala23 form the signal peptide. Ser147 (charge relay system) is an active-site residue. Asn189 carries N-linked (GlcNAc...) asparagine glycosylation.

This sequence belongs to the carbohydrate esterase 1 (CE1) family. AxeA subfamily. As to quaternary structure, monomer. Glycosylated.

Its subcellular location is the secreted. The enzyme catalyses Deacetylation of xylans and xylo-oligosaccharides.. It functions in the pathway glycan degradation; xylan degradation. Its function is as follows. Acetylxylan esterase involved in the hydrolysis of xylan, a major structural heterogeneous polysaccharide found in plant biomass representing the second most abundant polysaccharide in the biosphere, after cellulose. Degrades acetylated xylans by cleaving acetyl side groups from the hetero-xylan backbone. The sequence is that of Acetylxylan esterase A (axeA) from Aspergillus ficuum.